A 218-amino-acid chain; its full sequence is Probable transaldolase (218 aa).

The active-site Schiff-base intermediate with substrate is the Lys-84.

It belongs to the transaldolase family. Type 3B subfamily.

It is found in the cytoplasm. It catalyses the reaction D-sedoheptulose 7-phosphate + D-glyceraldehyde 3-phosphate = D-erythrose 4-phosphate + beta-D-fructose 6-phosphate. The protein operates within carbohydrate degradation; pentose phosphate pathway; D-glyceraldehyde 3-phosphate and beta-D-fructose 6-phosphate from D-ribose 5-phosphate and D-xylulose 5-phosphate (non-oxidative stage): step 2/3. Transaldolase is important for the balance of metabolites in the pentose-phosphate pathway. This Bartonella henselae (strain ATCC 49882 / DSM 28221 / CCUG 30454 / Houston 1) (Rochalimaea henselae) protein is Probable transaldolase.